A 194-amino-acid chain; its full sequence is Probable proteasome subunit beta type-4 (194 aa).

The protein belongs to the peptidase T1B family. In terms of assembly, the 26S proteasome consists of a 20S proteasome core and two 19S regulatory subunits. The 20S proteasome core is composed of 28 subunits that are arranged in four stacked rings, resulting in a barrel-shaped structure. The two end rings are each formed by seven alpha subunits, and the two central rings are each formed by seven beta subunits. The catalytic chamber with the active sites is on the inside of the barrel.

It is found in the cytoplasm. Its subcellular location is the nucleus. Non-catalytic component of the proteasome, a multicatalytic proteinase complex which is characterized by its ability to cleave peptides with Arg, Phe, Tyr, Leu, and Glu adjacent to the leaving group at neutral or slightly basic pH. The proteasome has an ATP-dependent proteolytic activity. In Meyerozyma guilliermondii (strain ATCC 6260 / CBS 566 / DSM 6381 / JCM 1539 / NBRC 10279 / NRRL Y-324) (Yeast), this protein is Probable proteasome subunit beta type-4 (PRO2).